Consider the following 186-residue polypeptide: Lipid A palmitoyltransferase PagP (186 aa).

A signal peptide spans 1-25; it reads MNVSKYVAIFSFVFIQLISVGKVFA. Residues His58, Asp101, and Ser102 contribute to the active site.

Belongs to the lipid A palmitoyltransferase family. In terms of assembly, homodimer.

The protein resides in the cell outer membrane. The catalysed reaction is lipid A (E. coli) + a 1-hexadecanoyl-2-acyl-sn-glycero-3-phosphocholine = hepta-acyl lipid A (E. coli) + a 2-acyl-sn-glycero-3-phosphocholine. The enzyme catalyses lipid IIA + a 1-hexadecanoyl-2-acyl-sn-glycero-3-phosphocholine = lipid IIB + a 2-acyl-sn-glycero-3-phosphocholine. It catalyses the reaction lipid IVA (E. coli) + a 1-hexadecanoyl-2-acyl-sn-glycero-3-phosphocholine = lipid IVB (E. coli) + a 2-acyl-sn-glycero-3-phosphocholine. In terms of biological role, transfers a palmitate residue from the sn-1 position of a phospholipid to the N-linked hydroxymyristate on the proximal unit of lipid A or its precursors. The chain is Lipid A palmitoyltransferase PagP from Escherichia coli O157:H7.